A 499-amino-acid polypeptide reads, in one-letter code: MPSDFFLQPLDGGPRVPVGPGQTVIGRGPLLGITDKRVSRRHAILEVVDSQLRIKPIHRNPCFYQSSEKSQHSPMETQVWSQLHPGDSFSLLLDKYAFRVFSAESEVEMECTLRNSQMLDEDDILSEMQKSPVVNLPDKTTGASQLQGSPEITKTKCPTIDPMSSSGECRAFSEHQPRPTQRKRILPAWMLAESLSDQSLSTPAEGGDKDVIQRSGKAGTCEDRTPGNTSWHGKKRLSPSGNSKSVSAEQDPGKKCRKADQEGPGVSSENVPESSSSNIVKDPDVDIVKTNKQKDGILIEELGEVSKHKAATKPTTNEEGESCARVQSKSPPEKSQGCHPESSSAPSSPDALHTDTADPVLGCSEESKVRRTACMYGANCYRRNPLHFQHFSHPGDSDYGEVHGTDEGVIGDRPECPYGASCYRKNPQHKMEYRHSALPARVALDEDDDDVGQPSDDEDEEDYEPTDEDSDWHPGKDDEEQEDVDELLKEAKSSLHLKH.

Positions 1-108 constitute an FHA-like domain; it reads MPSDFFLQPL…RVFSAESEVE (108 aa). S116 carries the phosphoserine; by ATM modification. Disordered regions lie at residues 134-183, 197-292, and 305-358; these read VNLP…TQRK, DQSL…KTNK, and VSKH…DTAD. Positions 141 to 152 are enriched in polar residues; that stretch reads TGASQLQGSPEI. S149 carries the phosphoserine modification. The KBM motif lies at 182–191; that stretch reads RKRILPAWML. Over residues 239-248 the composition is skewed to polar residues; it reads PSGNSKSVSA. Positions 251 to 261 are enriched in basic and acidic residues; sequence DPGKKCRKADQ. The segment covering 264 to 278 has biased composition (low complexity); sequence PGVSSENVPESSSSN. Positions 281-292 are enriched in basic and acidic residues; sequence KDPDVDIVKTNK. Low complexity predominate over residues 340 to 349; that stretch reads PESSSAPSSP. R371, Y376, Y381, and R382 together coordinate a glycoprotein. Residues 372–393 form a PBZ-type 1 zinc finger; sequence TACMYGANCYRRNPLHFQHFSH. Positions 401–411 are flexible linker; it reads EVHGTDEGVIG. Residues 414-435 form a PBZ-type 2 zinc finger; it reads PECPYGASCYRKNPQHKMEYRH. Residues Y418, Y423, and R424 each coordinate a glycoprotein. The segment at 440–499 is disordered; the sequence is ARVALDEDDDDVGQPSDDEDEEDYEPTDEDSDWHPGKDDEEQEDVDELLKEAKSSLHLKH. Residues 445-470 show a composition bias toward acidic residues; sequence DEDDDDVGQPSDDEDEEDYEPTDEDS. The NAP1L motif motif lies at 463 to 487; the sequence is YEPTDEDSDWHPGKDDEEQEDVDEL.

This sequence belongs to the APLF family. In terms of assembly, interacts with LIG4. Interacts with PARP1. Interacts with XRCC4. Interacts (via KBM motif) with XRCC5 and XRCC6; promoting recruitment to DNA damage sites. Interacts with XRCC1. Interacts (via C-terminal disordered region) with histones; interacts with histone H2A, H2B and H3-H4. Post-translationally, poly-ADP-ribosylated. In addition to binding non covalently poly-ADP-ribose via its PBZ-type zinc fingers, the protein is also covalently poly-ADP-ribosylated by PARP1. Phosphorylated in an ATM-dependent manner upon double-strand DNA break.

It localises to the nucleus. Its subcellular location is the chromosome. The protein resides in the cytoplasm. The protein localises to the cytosol. Functionally, histone chaperone involved in single-strand and double-strand DNA break repair. Recruited to sites of DNA damage through interaction with branched poly-ADP-ribose chains, a polymeric post-translational modification synthesized transiently at sites of chromosomal damage to accelerate DNA strand break repair reactions. Following recruitment to DNA damage sites, acts as a histone chaperone that mediates histone eviction during DNA repair and promotes recruitment of histone variant MACROH2A1. Also has a nuclease activity: displays apurinic-apyrimidinic (AP) endonuclease and 3'-5' exonuclease activities in vitro. Also able to introduce nicks at hydroxyuracil and other types of pyrimidine base damage. Together with PARP3, promotes the retention of the LIG4-XRCC4 complex on chromatin and accelerate DNA ligation during non-homologous end-joining (NHEJ). Also acts as a negative regulator of cell pluripotency by promoting histone exchange. Required for the embryo implantation during the epithelial to mesenchymal transition in females. This Mus musculus (Mouse) protein is Aprataxin and PNK-like factor (Aplf).